We begin with the raw amino-acid sequence, 202 residues long: Protein N-terminal glutamine amidohydrolase (202 aa).

Active-site residues include cysteine 27, histidine 80, and aspartate 96.

The protein belongs to the NTAQ1 family. In terms of assembly, monomer.

It is found in the cytoplasm. Its subcellular location is the cytosol. The protein localises to the nucleus. It carries out the reaction N-terminal L-glutaminyl-[protein] + H2O = N-terminal L-glutamyl-[protein] + NH4(+). Its function is as follows. Mediates the side-chain deamidation of N-terminal glutamine residues to glutamate, an important step in N-end rule pathway of protein degradation. Conversion of the resulting N-terminal glutamine to glutamate renders the protein susceptible to arginylation, polyubiquitination and degradation as specified by the N-end rule. Does not act on substrates with internal or C-terminal glutamine and does not act on non-glutamine residues in any position. Does not deaminate acetylated N-terminal glutamine. With the exception of proline, all tested second-position residues on substrate peptides do not greatly influence the activity. In contrast, a proline at position 2, virtually abolishes deamidation of N-terminal glutamine. In Danio rerio (Zebrafish), this protein is Protein N-terminal glutamine amidohydrolase (ntaq1).